The primary structure comprises 259 residues: Sesquipedalian-2 (259 aa).

The region spanning 17-121 (PADHTGFLRS…WVKALSRASF (105 aa)) is the PH domain. Positions 124 to 150 (MRLVVRELESQLQDARQSLALHRCASQ) form a coiled coil. The tract at residues 155-178 (SCSKSQAPDHRAPDPENGHFLPRD) is disordered. Positions 161-178 (APDHRAPDPENGHFLPRD) are enriched in basic and acidic residues. Residues 223–235 (CFSTLHDWYGKEI) carry the F&amp;H motif.

The protein belongs to the sesquipedalian family. In terms of assembly, forms homodimers and heterodimers with PHETA1. Interacts with OCRL and INPP5B.

The protein localises to the early endosome. It is found in the recycling endosome. It localises to the golgi apparatus. The protein resides in the trans-Golgi network. Its subcellular location is the cytoplasmic vesicle. The protein localises to the clathrin-coated vesicle. In terms of biological role, plays a role in endocytic trafficking. Required for receptor recycling from endosomes, both to the trans-Golgi network and the plasma membrane. This Mus musculus (Mouse) protein is Sesquipedalian-2.